The chain runs to 55 residues: Large ribosomal subunit protein bL33 (55 aa).

Belongs to the bacterial ribosomal protein bL33 family.

This Polaromonas sp. (strain JS666 / ATCC BAA-500) protein is Large ribosomal subunit protein bL33.